Consider the following 591-residue polypeptide: V-type ATP synthase alpha chain (591 aa).

ATP is bound at residue 233 to 240; that stretch reads GPFGAGKT.

It belongs to the ATPase alpha/beta chains family.

It catalyses the reaction ATP + H2O + 4 H(+)(in) = ADP + phosphate + 5 H(+)(out). Functionally, produces ATP from ADP in the presence of a proton gradient across the membrane. The V-type alpha chain is a catalytic subunit. This chain is V-type ATP synthase alpha chain, found in Streptococcus pyogenes serotype M5 (strain Manfredo).